The chain runs to 418 residues: Tyrosine--tRNA ligase (418 aa).

Residue Y34 participates in L-tyrosine binding. Positions 39–48 (PTGDSMHIGH) match the 'HIGH' region motif. Y166 and Q170 together coordinate L-tyrosine. The short motif at 228-232 (KFGKT) is the 'KMSKS' region element. An ATP-binding site is contributed by K231. Residues 350-417 (TNIVELLTET…KKNYFLAKVK (68 aa)) form the S4 RNA-binding domain.

Belongs to the class-I aminoacyl-tRNA synthetase family. TyrS type 1 subfamily. In terms of assembly, homodimer.

It is found in the cytoplasm. The enzyme catalyses tRNA(Tyr) + L-tyrosine + ATP = L-tyrosyl-tRNA(Tyr) + AMP + diphosphate + H(+). Catalyzes the attachment of tyrosine to tRNA(Tyr) in a two-step reaction: tyrosine is first activated by ATP to form Tyr-AMP and then transferred to the acceptor end of tRNA(Tyr). The sequence is that of Tyrosine--tRNA ligase from Levilactobacillus brevis (Lactobacillus brevis).